The following is a 387-amino-acid chain: Anhydro-N-acetylmuramic acid kinase (387 aa).

17–24 is an ATP binding site; that stretch reads GTSMDGVD.

This sequence belongs to the anhydro-N-acetylmuramic acid kinase family.

The enzyme catalyses 1,6-anhydro-N-acetyl-beta-muramate + ATP + H2O = N-acetyl-D-muramate 6-phosphate + ADP + H(+). The protein operates within amino-sugar metabolism; 1,6-anhydro-N-acetylmuramate degradation. Its pathway is cell wall biogenesis; peptidoglycan recycling. In terms of biological role, catalyzes the specific phosphorylation of 1,6-anhydro-N-acetylmuramic acid (anhMurNAc) with the simultaneous cleavage of the 1,6-anhydro ring, generating MurNAc-6-P. Is required for the utilization of anhMurNAc either imported from the medium or derived from its own cell wall murein, and thus plays a role in cell wall recycling. In Burkholderia mallei (strain ATCC 23344), this protein is Anhydro-N-acetylmuramic acid kinase.